A 270-amino-acid polypeptide reads, in one-letter code: uncharacterized protein (270 aa).

The segment covering 22–31 (EAPQRTEASR) has biased composition (basic and acidic residues). A disordered region spans residues 22–42 (EAPQRTEASRTHPSPFLALPG).

This is an uncharacterized protein from Homo sapiens (Human).